The sequence spans 482 residues: O-methyltransferase tpcA (482 aa).

Residues 293–294 (GG), Asp316, 348–349 (SF), and Arg364 contribute to the S-adenosyl-L-methionine site. The active-site Proton acceptor is His368.

This sequence belongs to the class I-like SAM-binding methyltransferase superfamily. Cation-independent O-methyltransferase family. Specifically expressed in conidia.

The protein operates within secondary metabolite biosynthesis. Functionally, O-methyltransferase; part of the gene cluster that mediates the biosynthesis of trypacidin, a mycotoxin with antiprotozoal activity and that plays a role in the infection process. The pathway begins with the synthesis of atrochrysone thioester by the polyketide synthase (PKS) tpcC. The atrochrysone carboxyl ACP thioesterase tpcB then breaks the thioester bond and releases the atrochrysone carboxylic acid from tpcC. The decarboxylase tpcK converts atrochrysone carboxylic acid to atrochrysone which is further reduced into emodin anthrone. The next step is performed by the emodin anthrone oxygenase tpcL that catalyzes the oxidation of emodinanthrone to emodin. Emodin O-methyltransferase encoded by tpcA catalyzes methylation of the 8-hydroxy group of emodin to form questin. Ring cleavage of questin by questin oxidase tpcI leads to desmethylsulochrin via several intermediates including questin epoxide. Another methylation step catalyzed by tpcM leads to the formation of sulochrin which is further converted to monomethylsulfochrin by tpcH. Finally, the tpcJ catalyzes the conversion of monomethylsulfochrin to trypacidin. Trypacidin is toxic for human pulmonary and bronchial epithelial cells by initiating the intracellular formation of nitric oxide (NO) and hydrogen peroxide (H(2)O(2)), thus triggering host necrotic cell death. The trypacidin pathway is also able to produce endocrocin via a distinct route from the endocrocin Enc pathway. The protein is O-methyltransferase tpcA of Aspergillus fumigatus (strain ATCC MYA-4609 / CBS 101355 / FGSC A1100 / Af293) (Neosartorya fumigata).